A 78-amino-acid chain; its full sequence is MSRVCQVTGKRPMVGNNVSHANNKTRRRFLPNLHNHRFWVESENRFVRLRVSTKGMRIIDKLGIDKVLVDLRAQGQKV.

This sequence belongs to the bacterial ribosomal protein bL28 family.

The sequence is that of Large ribosomal subunit protein bL28 from Psychrobacter arcticus (strain DSM 17307 / VKM B-2377 / 273-4).